A 270-amino-acid polypeptide reads, in one-letter code: Putative postmeiotic segregation increased 2-like protein 11 (270 aa).

It belongs to the DNA mismatch repair MutL/HexB family.

This chain is Putative postmeiotic segregation increased 2-like protein 11 (PMS2P11), found in Homo sapiens (Human).